A 314-amino-acid chain; its full sequence is Mycothiol acetyltransferase (314 aa).

E39 serves as a coordination point for 1D-myo-inositol 2-(L-cysteinylamino)-2-deoxy-alpha-D-glucopyranoside. Residue L80–A82 participates in acetyl-CoA binding. Residues F159–P313 enclose the N-acetyltransferase domain. Residues E186, K228, and E237 each contribute to the 1D-myo-inositol 2-(L-cysteinylamino)-2-deoxy-alpha-D-glucopyranoside site. Acetyl-CoA is bound by residues L241 to V243 and Q248 to R254. Y275 lines the 1D-myo-inositol 2-(L-cysteinylamino)-2-deoxy-alpha-D-glucopyranoside pocket.

The protein belongs to the acetyltransferase family. MshD subfamily. As to quaternary structure, monomer.

It catalyses the reaction 1D-myo-inositol 2-(L-cysteinylamino)-2-deoxy-alpha-D-glucopyranoside + acetyl-CoA = mycothiol + CoA + H(+). Catalyzes the transfer of acetyl from acetyl-CoA to desacetylmycothiol (Cys-GlcN-Ins) to form mycothiol. The chain is Mycothiol acetyltransferase from Jonesia denitrificans (strain ATCC 14870 / DSM 20603 / BCRC 15368 / CIP 55.134 / JCM 11481 / NBRC 15587 / NCTC 10816 / Prevot 55134) (Listeria denitrificans).